The chain runs to 62 residues: Short neurotoxin 1 (62 aa).

Residues 1 to 16 (LECHNQQSIQTPTTTG) are compositionally biased toward polar residues. The tract at residues 1-20 (LECHNQQSIQTPTTTGCSGG) is disordered. Cystine bridges form between Cys3–Cys24, Cys17–Cys41, Cys43–Cys54, and Cys55–Cys60.

Belongs to the three-finger toxin family. Short-chain subfamily. Type I alpha-neurotoxin sub-subfamily. As to expression, expressed by the venom gland.

It is found in the secreted. Functionally, binds to muscle nicotinic acetylcholine receptor (nAChR) and inhibit acetylcholine from binding to the receptor, thereby impairing neuromuscular transmission. This chain is Short neurotoxin 1, found in Naja kaouthia (Monocled cobra).